A 465-amino-acid chain; its full sequence is 23S rRNA (uracil(1939)-C(5))-methyltransferase RlmD (465 aa).

The disordered stretch occupies residues 1–24; it reads MSEAVPLSTRRASSAGDAPGRAPV. In terms of domain architecture, TRAM spans 16-80; that stretch reads GDAPGRAPVL…PTYEQAQVVD (65 aa). The [4Fe-4S] cluster site is built by cysteine 93, cysteine 99, cysteine 102, and cysteine 181. S-adenosyl-L-methionine contacts are provided by glutamine 289, phenylalanine 318, asparagine 323, glutamate 339, asparagine 367, and aspartate 388. Cysteine 421 acts as the Nucleophile in catalysis.

The protein belongs to the class I-like SAM-binding methyltransferase superfamily. RNA M5U methyltransferase family. RlmD subfamily.

The catalysed reaction is uridine(1939) in 23S rRNA + S-adenosyl-L-methionine = 5-methyluridine(1939) in 23S rRNA + S-adenosyl-L-homocysteine + H(+). Its function is as follows. Catalyzes the formation of 5-methyl-uridine at position 1939 (m5U1939) in 23S rRNA. The sequence is that of 23S rRNA (uracil(1939)-C(5))-methyltransferase RlmD from Burkholderia mallei (strain ATCC 23344).